The sequence spans 326 residues: Eukaryotic translation initiation factor 3 subunit I (326 aa).

WD repeat units follow at residues glycine 8 to threonine 47, glycine 50 to serine 89, methionine 145 to aspartate 184, aspartate 188 to threonine 227, and glycine 285 to glutamate 326.

It belongs to the eIF-3 subunit I family. Component of the eukaryotic translation initiation factor 3 (eIF-3) complex. The eIF-3 complex interacts with pix.

Its subcellular location is the cytoplasm. Component of the eukaryotic translation initiation factor 3 (eIF-3) complex, which is involved in protein synthesis of a specialized repertoire of mRNAs and, together with other initiation factors, stimulates binding of mRNA and methionyl-tRNAi to the 40S ribosome. The eIF-3 complex specifically targets and initiates translation of a subset of mRNAs involved in cell proliferation. The protein is Eukaryotic translation initiation factor 3 subunit I of Drosophila grimshawi (Hawaiian fruit fly).